The following is a 293-amino-acid chain: Ribosomal protein L11 methyltransferase (293 aa).

Thr-145, Gly-166, Asp-188, and Asn-230 together coordinate S-adenosyl-L-methionine.

Belongs to the methyltransferase superfamily. PrmA family.

The protein resides in the cytoplasm. The enzyme catalyses L-lysyl-[protein] + 3 S-adenosyl-L-methionine = N(6),N(6),N(6)-trimethyl-L-lysyl-[protein] + 3 S-adenosyl-L-homocysteine + 3 H(+). Its function is as follows. Methylates ribosomal protein L11. The chain is Ribosomal protein L11 methyltransferase from Shewanella halifaxensis (strain HAW-EB4).